A 755-amino-acid polypeptide reads, in one-letter code: PWWP domain-containing protein 2A (755 aa).

Residues 1–15 (MAAVAAEAAATAASP) show a composition bias toward low complexity. Residues 1–153 (MAAVAAEAAA…VPPAGGDSTV (153 aa)) are disordered. The span at 64 to 76 (DEPPLPPPPPPPG) shows a compositional bias: pro residues. Phosphoserine is present on residues S81, S102, S116, and S119. Residues 112–126 (ELPPSPASPPEQPPA) are compositionally biased toward pro residues. The tract at residues 148 to 373 (GGDSTVSQLI…KLKTDHKVDG (226 aa)) is interaction with HDAC1 and MTA1. K208 participates in a covalent cross-link: Glycyl lysine isopeptide (Lys-Gly) (interchain with G-Cter in SUMO2). Disordered regions lie at residues 282 to 301 (YNQS…KRKM), 334 to 384 (KEIR…KRNA), 400 to 562 (KVSA…GSKN), and 578 to 626 (SSAS…SKEE). Basic residues predominate over residues 292 to 301 (RKIKRPKRKM). 2 stretches are compositionally biased toward basic and acidic residues: residues 346–356 (SKYEDKKRRNE) and 368–381 (DHKV…ESQK). Residues 403 to 421 (AQANTSKAQLSTKKVLQSK) show a composition bias toward polar residues. Over residues 422 to 444 (NMDHAKAREVLKIAKEKAQKKQN) the composition is skewed to basic and acidic residues. The segment at 423-574 (MDHAKAREVL…SVYMTLNQKK (152 aa)) is interaction with the H2A.Z/H2AZ1. Residues 508 to 527 (SRCTSTRSAGEAPSENQSPS) are compositionally biased toward polar residues. Residues 593 to 603 (SSNSECSSSES) show a composition bias toward low complexity. The PWWP domain occupies 655–715 (VGDIVWAKIY…LSQLSPFLEN (61 aa)).

Component of a MTA1-specific subcomplex of the NuRD complex (M1HR), composed of PWWP2A, MTA1/2, HDAC1/2, and RBBP4/7 but does not contain CHD4 and MBD3. Interacts with MTA1; the interaction mediates the association of PWWP2A with the M1HR complex. Interacts with H2A.Z/H2AZ1. Interacts (via PWWP domain) with histone H3 trimethylated at 'Lys-36' (H3K36me3). Does not interact with CHD4 and MBD3. As to quaternary structure, interacts with MTA1 and with HDAC1 in a MTA1-dependent manner. Does not interact with CHD4 and MBD3.

The protein localises to the nucleus. Its function is as follows. Chromatin-binding protein that acts as an adapter between distinct nucleosome components (H3K36me3 or H2A.Z) and chromatin-modifying complexes, contributing to the regulation of the levels of histone acetylation at actively transcribed genes. Competes with CHD4 and MBD3 for interaction with MTA1 to form a NuRD subcomplex, preventing the formation of full NuRD complex (containing CHD4 and MBD3), leading to recruitment of HDACs to gene promoters resulting in turn in the deacetylation of nearby H3K27 and H2A.Z. Plays a role in facilitating transcriptional elongation and repression of spurious transcription initiation through regulation of histone acetylation. Essential for proper mitosis progression. This chain is PWWP domain-containing protein 2A (PWWP2A), found in Homo sapiens (Human).